A 651-amino-acid polypeptide reads, in one-letter code: Mitogen-activated protein kinase kinase kinase 3 (651 aa).

In terms of domain architecture, Protein kinase spans 68 to 330 (WRKGELIGCG…ATELLQHPFV (263 aa)). ATP-binding positions include 74-82 (IGCGAFGRV) and K97. Residues 105–130 (SASKEKTQGHIRELEEEVQLLKNLSH) are a coiled coil. Residues K108 and K110 each participate in a glycyl lysine isopeptide (Lys-Gly) (interchain with G-Cter in ubiquitin) cross-link. D196 (proton acceptor) is an active-site residue. Residues 573-608 (MPSPLKSSKRTLNTSRVMQSGTEPTQVNESTKKGVN) are disordered. The span at 582-608 (RTLNTSRVMQSGTEPTQVNESTKKGVN) shows a compositional bias: polar residues. Residues 618-641 (RKWEEELYEELERHRENLRHAGAG) are a coiled coil.

This sequence belongs to the protein kinase superfamily. STE Ser/Thr protein kinase family. MAP kinase kinase kinase subfamily. In terms of assembly, interacts with NACK2 and MKK6. As to expression, expressed in roots and flowers.

Its subcellular location is the cytoplasm. It is found in the cytoskeleton. The enzyme catalyses L-seryl-[protein] + ATP = O-phospho-L-seryl-[protein] + ADP + H(+). It carries out the reaction L-threonyl-[protein] + ATP = O-phospho-L-threonyl-[protein] + ADP + H(+). In terms of biological role, involved in cortical microtubules organization and stabilization by regulating the phosphorylation state of microtubule-associated proteins such as MAP65-1. This Arabidopsis thaliana (Mouse-ear cress) protein is Mitogen-activated protein kinase kinase kinase 3 (ANP3).